Consider the following 406-residue polypeptide: Cysteine desulfurase (406 aa).

Lys-226 carries the post-translational modification N6-(pyridoxal phosphate)lysine. The Cysteine persulfide intermediate role is filled by Cys-364.

This sequence belongs to the class-V pyridoxal-phosphate-dependent aminotransferase family. Csd subfamily. As to quaternary structure, homodimer. Interacts with SufE and the SufBCD complex composed of SufB, SufC and SufD. The interaction with SufE is required to mediate the direct transfer of the sulfur atom from the S-sulfanylcysteine. It depends on pyridoxal 5'-phosphate as a cofactor.

It localises to the cytoplasm. It carries out the reaction (sulfur carrier)-H + L-cysteine = (sulfur carrier)-SH + L-alanine. The enzyme catalyses L-selenocysteine + AH2 = hydrogenselenide + L-alanine + A + H(+). It functions in the pathway cofactor biosynthesis; iron-sulfur cluster biosynthesis. Cysteine desulfurases mobilize the sulfur from L-cysteine to yield L-alanine, an essential step in sulfur metabolism for biosynthesis of a variety of sulfur-containing biomolecules. Component of the suf operon, which is activated and required under specific conditions such as oxidative stress and iron limitation. Acts as a potent selenocysteine lyase in vitro, that mobilizes selenium from L-selenocysteine. Selenocysteine lyase activity is however unsure in vivo. The polypeptide is Cysteine desulfurase (Yersinia pestis bv. Antiqua (strain Angola)).